An 896-amino-acid chain; its full sequence is Alanine--tRNA ligase (896 aa).

The Zn(2+) site is built by histidine 574, histidine 578, cysteine 677, and histidine 681.

It belongs to the class-II aminoacyl-tRNA synthetase family. It depends on Zn(2+) as a cofactor.

The protein localises to the cytoplasm. The enzyme catalyses tRNA(Ala) + L-alanine + ATP = L-alanyl-tRNA(Ala) + AMP + diphosphate. Catalyzes the attachment of alanine to tRNA(Ala) in a two-step reaction: alanine is first activated by ATP to form Ala-AMP and then transferred to the acceptor end of tRNA(Ala). Also edits incorrectly charged Ser-tRNA(Ala) and Gly-tRNA(Ala) via its editing domain. This is Alanine--tRNA ligase from Mycoplasma capricolum subsp. capricolum (strain California kid / ATCC 27343 / NCTC 10154).